A 914-amino-acid chain; its full sequence is Neuropilin-1 (914 aa).

Positions 1–18 (MDWGLFLHCAALTFTLSR) are cleaved as a signal peptide. Residues 20–847 (LRSDKCGDTI…PGNVLKTLDP (828 aa)) are Extracellular-facing. 3 cysteine pairs are disulfide-bonded: cysteine 25–cysteine 52, cysteine 80–cysteine 102, and cysteine 145–cysteine 171. 2 CUB domains span residues 25–139 (CGDT…YEVF) and 145–263 (CSRN…YSVS). Asparagine 148 carries an N-linked (GlcNAc...) asparagine glycan. Ca(2+) is bound by residues glutamate 193, aspartate 207, and aspartate 248. Cysteine 204 and cysteine 226 form a disulfide bridge. Asparagine 259 carries N-linked (GlcNAc...) asparagine glycosylation. 2 disulfides stabilise this stretch: cysteine 273–cysteine 422 and cysteine 429–cysteine 581. 2 F5/8 type C domains span residues 273–422 (CMEP…VYGC) and 429–581 (CSGM…LLGC). An N-linked (GlcNAc...) asparagine glycan is attached at asparagine 520. O-linked (Xyl...) (chondroitin sulfate) serine; alternate glycosylation is present at serine 610. O-linked (Xyl...) (heparan sulfate) serine; alternate glycosylation occurs at serine 610. The MAM domain maps to 636–801 (PYNLNCGFGW…NHISQEDCQK (166 aa)). The interval 809–829 (IVEEDPESNQTGFTPSYRTDE) is disordered. The span at 816–825 (SNQTGFTPSY) shows a compositional bias: polar residues. A glycan (N-linked (GlcNAc...) asparagine) is linked at asparagine 817. A helical transmembrane segment spans residues 848 to 870 (ILITIIAMSALGVLLGAICGVVL). The Cytoplasmic portion of the chain corresponds to 871-914 (YCACWHNGMSERNLSALENYNFELVDGVKLKKDKLNTQNSYSEA).

Belongs to the neuropilin family. As to quaternary structure, homodimer, and heterodimer. As to expression, developing nervous system; optic tectum (layers D and E of SGFS), amacrine cells of retina, neurites of dorsal root ganglia. Also expressed in non-neuronal cells, e.g. blood vessels in the entire embryo.

The protein resides in the mitochondrion membrane. It is found in the cell membrane. Its function is as follows. Receptor involved in the development of the cardiovascular system, in angiogenesis, in the formation of certain neuronal circuits and in organogenesis outside the nervous system. Mediates the chemorepulsant activity of semaphorins. Binding to VEGFA initiates a signaling pathway needed for motor neuron axon guidance and cell body migration, including for the caudal migration of facial motor neurons from rhombomere 4 to rhombomere 6 during embryonic development. Regulates mitochondrial iron transport via interaction. The protein is Neuropilin-1 (NRP1) of Gallus gallus (Chicken).